Consider the following 437-residue polypeptide: Enolase (437 aa).

Gln-162 lines the (2R)-2-phosphoglycerate pocket. Glu-204 acts as the Proton donor in catalysis. Mg(2+)-binding residues include Asp-251, Glu-297, and Asp-324. Positions 349, 378, 379, and 400 each coordinate (2R)-2-phosphoglycerate. Catalysis depends on Lys-349, which acts as the Proton acceptor.

The protein belongs to the enolase family. It depends on Mg(2+) as a cofactor.

Its subcellular location is the cytoplasm. It localises to the secreted. The protein resides in the cell surface. The enzyme catalyses (2R)-2-phosphoglycerate = phosphoenolpyruvate + H2O. The protein operates within carbohydrate degradation; glycolysis; pyruvate from D-glyceraldehyde 3-phosphate: step 4/5. Its function is as follows. Catalyzes the reversible conversion of 2-phosphoglycerate (2-PG) into phosphoenolpyruvate (PEP). It is essential for the degradation of carbohydrates via glycolysis. In Chlorobium limicola (strain DSM 245 / NBRC 103803 / 6330), this protein is Enolase.